The sequence spans 333 residues: Large ribosomal subunit protein uL3 (333 aa).

Belongs to the universal ribosomal protein uL3 family. As to quaternary structure, part of the 50S ribosomal subunit. Forms a cluster with proteins L14 and L24e.

One of the primary rRNA binding proteins, it binds directly near the 3'-end of the 23S rRNA, where it nucleates assembly of the 50S subunit. The chain is Large ribosomal subunit protein uL3 from Methanocorpusculum labreanum (strain ATCC 43576 / DSM 4855 / Z).